A 523-amino-acid polypeptide reads, in one-letter code: Probable glucose-1-phosphate adenylyltransferase large subunit, chloroplastic (523 aa).

The protein belongs to the bacterial/plant glucose-1-phosphate adenylyltransferase family. As to quaternary structure, heterotetramer.

It localises to the plastid. The protein resides in the chloroplast. The enzyme catalyses alpha-D-glucose 1-phosphate + ATP + H(+) = ADP-alpha-D-glucose + diphosphate. It participates in glycan biosynthesis; starch biosynthesis. With respect to regulation, activated by 3'phosphoglycerate, inhibited by orthophosphate. Allosteric regulation. This protein plays a role in synthesis of starch. It catalyzes the synthesis of the activated glycosyl donor, ADP-glucose from Glc-1-P and ATP. The sequence is that of Probable glucose-1-phosphate adenylyltransferase large subunit, chloroplastic from Arabidopsis thaliana (Mouse-ear cress).